The following is a 296-amino-acid chain: MPTPYLSGSAVALVTPFKSDSSIDFEAIARLTEFHVAAGTNIIIPCGTTGESPTLAEEEQVAIIKTVVEAAQGKLMVAAGAGTNNTHHAVELAKNAEKAGAAAILSVAPYYNKPSQEGFYQHYRHIAEAVAVPIIIYNVPGRTGCNVAASTILRLARDFDNVLAVKEASENFTQISELLEERPSNFAVLTGEDSLILPFMAMGGNGVISVAANEIPAQIRQLVESAGSGDLVTARTLYSRYRKLLKLNFIESNPVPVKYALARMGMIEENYRLPLVPLSAESKRAMDEELTLLGLV.

T49 lines the pyruvate pocket. Y137 (proton donor/acceptor) is an active-site residue. K166 acts as the Schiff-base intermediate with substrate in catalysis. I208 provides a ligand contact to pyruvate.

It belongs to the DapA family. Homotetramer; dimer of dimers.

The protein resides in the cytoplasm. It catalyses the reaction L-aspartate 4-semialdehyde + pyruvate = (2S,4S)-4-hydroxy-2,3,4,5-tetrahydrodipicolinate + H2O + H(+). The protein operates within amino-acid biosynthesis; L-lysine biosynthesis via DAP pathway; (S)-tetrahydrodipicolinate from L-aspartate: step 3/4. Catalyzes the condensation of (S)-aspartate-beta-semialdehyde [(S)-ASA] and pyruvate to 4-hydroxy-tetrahydrodipicolinate (HTPA). The polypeptide is 4-hydroxy-tetrahydrodipicolinate synthase (Chlorobium chlorochromatii (strain CaD3)).